The primary structure comprises 137 residues: NADH-quinone oxidoreductase subunit A (137 aa).

3 helical membrane-spanning segments follow: residues 12 to 32 (WGFA…LGLS), 66 to 86 (FYLV…LFAW), and 95 to 115 (WTGF…LVYL).

This sequence belongs to the complex I subunit 3 family. NDH-1 is composed of 13 different subunits. Subunits NuoA, H, J, K, L, M, N constitute the membrane sector of the complex.

It is found in the cell inner membrane. It catalyses the reaction a quinone + NADH + 5 H(+)(in) = a quinol + NAD(+) + 4 H(+)(out). NDH-1 shuttles electrons from NADH, via FMN and iron-sulfur (Fe-S) centers, to quinones in the respiratory chain. The immediate electron acceptor for the enzyme in this species is believed to be ubiquinone. Couples the redox reaction to proton translocation (for every two electrons transferred, four hydrogen ions are translocated across the cytoplasmic membrane), and thus conserves the redox energy in a proton gradient. The chain is NADH-quinone oxidoreductase subunit A from Pseudomonas savastanoi pv. phaseolicola (strain 1448A / Race 6) (Pseudomonas syringae pv. phaseolicola (strain 1448A / Race 6)).